The sequence spans 598 residues: uncharacterized protein (598 aa).

Mn(2+)-binding residues include Asp397, Asp408, Glu506, and Glu520.

The protein belongs to the peptidase M24B family. Mn(2+) is required as a cofactor.

This is an uncharacterized protein from Schizosaccharomyces pombe (strain 972 / ATCC 24843) (Fission yeast).